The chain runs to 397 residues: G2/mitotic-specific cyclin-B1 (397 aa).

Polar residues predominate over residues 1 to 17 (MALRVTRNTRLASSENQ). The tract at residues 1 to 30 (MALRVTRNTRLASSENQGALPGKAAVANKP) is disordered.

This sequence belongs to the cyclin family. Cyclin AB subfamily. In terms of assembly, interacts with the CDK1 protein kinase to form a serine/threonine kinase holoenzyme complex also known as maturation promoting factor (MPF). The cyclin subunit imparts substrate specificity to the complex.

In terms of biological role, essential for the control of the cell cycle at the G2/M (mitosis) transition. The sequence is that of G2/mitotic-specific cyclin-B1 (ccnb1) from Carassius auratus (Goldfish).